Consider the following 938-residue polypeptide: Isoleucine--tRNA ligase (938 aa).

Positions 58-68 (PYANGNIHLGH) match the 'HIGH' region motif. E562 is a binding site for L-isoleucyl-5'-AMP. Residues 603 to 607 (KMSKS) carry the 'KMSKS' region motif. K606 is a binding site for ATP. Zn(2+)-binding residues include C901, C904, C921, and C924.

This sequence belongs to the class-I aminoacyl-tRNA synthetase family. IleS type 1 subfamily. As to quaternary structure, monomer. The cofactor is Zn(2+).

The protein localises to the cytoplasm. The enzyme catalyses tRNA(Ile) + L-isoleucine + ATP = L-isoleucyl-tRNA(Ile) + AMP + diphosphate. Its function is as follows. Catalyzes the attachment of isoleucine to tRNA(Ile). As IleRS can inadvertently accommodate and process structurally similar amino acids such as valine, to avoid such errors it has two additional distinct tRNA(Ile)-dependent editing activities. One activity is designated as 'pretransfer' editing and involves the hydrolysis of activated Val-AMP. The other activity is designated 'posttransfer' editing and involves deacylation of mischarged Val-tRNA(Ile). The polypeptide is Isoleucine--tRNA ligase (Glaesserella parasuis serovar 5 (strain SH0165) (Haemophilus parasuis)).